We begin with the raw amino-acid sequence, 521 residues long: Caspase-10 (521 aa).

Residues 1–219 (MKSQGQHWYS…GEEELVSQTD (219 aa)) constitute a propeptide that is removed on maturation. DED domains lie at 19–97 (SFRE…HLNC) and 114–187 (LFRN…NIEK). Composition is skewed to polar residues over residues 231–248 (SWQN…TNGA) and 259–268 (ASANTLNSET). The disordered stretch occupies residues 231 to 269 (SWQNKHAGSNGNRATNGAPSLVSRGMQGASANTLNSETS). Residues His-358 and Cys-401 contribute to the active site.

The protein belongs to the peptidase C14A family. As to quaternary structure, heterotetramer that consists of two anti-parallel arranged heterodimers, each one formed by a 23/17 kDa (p23/17) (depending on the splicing events) and a 12 kDa (p12) subunit. Self-associates. Interacts with FADD and CASP8. Found in a Fas signaling complex consisting of FAS, FADD, CASP8 and CASP10. Interacts with RFFL and RNF34; negatively regulate CASP10 through proteasomal degradation. Interacts with RIOK3. Post-translationally, cleavage by granzyme B and autocatalytic activity generate the two active subunits. In terms of tissue distribution, detectable in most tissues. Lowest expression is seen in brain, kidney, prostate, testis and colon.

The catalysed reaction is Strict requirement for Asp at position P1 and has a preferred cleavage sequence of Leu-Gln-Thr-Asp-|-Gly.. Involved in the activation cascade of caspases responsible for apoptosis execution. Recruited to both Fas- and TNFR-1 receptors in a FADD dependent manner. May participate in the granzyme B apoptotic pathways. Cleaves and activates effector caspases CASP3, CASP4, CASP6, CASP7, CASP8 and CASP9. Hydrolyzes the small- molecule substrates, Tyr-Val-Ala-Asp-|-AMC and Asp-Glu-Val-Asp-|-AMC. Its function is as follows. Isoform 7 can enhance NF-kappaB activity but promotes only slight apoptosis. Functionally, isoform C is proteolytically inactive. The polypeptide is Caspase-10 (CASP10) (Homo sapiens (Human)).